Consider the following 95-residue polypeptide: Small ribosomal subunit protein bS18 (95 aa).

Belongs to the bacterial ribosomal protein bS18 family. Part of the 30S ribosomal subunit. Forms a tight heterodimer with protein bS6.

Its function is as follows. Binds as a heterodimer with protein bS6 to the central domain of the 16S rRNA, where it helps stabilize the platform of the 30S subunit. In Ehrlichia canis (strain Jake), this protein is Small ribosomal subunit protein bS18.